The chain runs to 206 residues: Large ribosomal subunit protein uL4 (206 aa).

Positions 48–97 (THAVKNRSLVSGGGKKPWKQKHTGRARQGSTRASQWVGGGKAMGPKPRDY) are disordered. The span at 63 to 72 (KPWKQKHTGR) shows a compositional bias: basic residues.

Belongs to the universal ribosomal protein uL4 family. Part of the 50S ribosomal subunit.

One of the primary rRNA binding proteins, this protein initially binds near the 5'-end of the 23S rRNA. It is important during the early stages of 50S assembly. It makes multiple contacts with different domains of the 23S rRNA in the assembled 50S subunit and ribosome. In terms of biological role, forms part of the polypeptide exit tunnel. The sequence is that of Large ribosomal subunit protein uL4 from Anaeromyxobacter sp. (strain K).